The sequence spans 126 residues: Class I hydrophobin 1 (126 aa).

Residues 1–16 (MQYMTIVAFLAATVAA) form the signal peptide. Intrachain disulfides connect Cys-38-Cys-100, Cys-46-Cys-94, Cys-47-Cys-75, and Cys-101-Cys-119.

Belongs to the fungal hydrophobin family.

The protein localises to the secreted. It localises to the cell wall. In terms of biological role, aerial growth, conidiation, and dispersal of filamentous fungi in the environment rely upon a capability of their secreting small amphipathic proteins called hydrophobins (HPBs) with low sequence identity. Class I can self-assemble into an outermost layer of rodlet bundles on aerial cell surfaces, conferring cellular hydrophobicity that supports fungal growth, development and dispersal; whereas Class II form highly ordered films at water-air interfaces through intermolecular interactions but contribute nothing to the rodlet structure. HYD1 and HYD2 are required for the structural integrity of the long aerial chains of microconidia. Does not seem to be important for the ability to cause seedling disease. The polypeptide is Class I hydrophobin 1 (Gibberella moniliformis (Maize ear and stalk rot fungus)).